The chain runs to 185 residues: dTTP/UTP pyrophosphatase (185 aa).

Asp-64 acts as the Proton acceptor in catalysis.

This sequence belongs to the Maf family. YhdE subfamily. The cofactor is a divalent metal cation.

The protein resides in the cytoplasm. The catalysed reaction is dTTP + H2O = dTMP + diphosphate + H(+). It carries out the reaction UTP + H2O = UMP + diphosphate + H(+). Nucleoside triphosphate pyrophosphatase that hydrolyzes dTTP and UTP. May have a dual role in cell division arrest and in preventing the incorporation of modified nucleotides into cellular nucleic acids. The protein is dTTP/UTP pyrophosphatase of Leptospira borgpetersenii serovar Hardjo-bovis (strain JB197).